The following is a 176-amino-acid chain: Cytochrome b (176 aa).

The next 3 helical transmembrane spans lie at 33–53 (FGSL…FLAM), 77–98 (WLLR…YLHI), and 113–133 (WNVG…GYVL). The heme b site is built by histidine 83 and histidine 97.

Belongs to the cytochrome b family. In terms of assembly, the cytochrome bc1 complex contains 11 subunits: 3 respiratory subunits (MT-CYB, CYC1 and UQCRFS1), 2 core proteins (UQCRC1 and UQCRC2) and 6 low-molecular weight proteins (UQCRH/QCR6, UQCRB/QCR7, UQCRQ/QCR8, UQCR10/QCR9, UQCR11/QCR10 and a cleavage product of UQCRFS1). This cytochrome bc1 complex then forms a dimer. It depends on heme b as a cofactor.

It localises to the mitochondrion inner membrane. Component of the ubiquinol-cytochrome c reductase complex (complex III or cytochrome b-c1 complex) that is part of the mitochondrial respiratory chain. The b-c1 complex mediates electron transfer from ubiquinol to cytochrome c. Contributes to the generation of a proton gradient across the mitochondrial membrane that is then used for ATP synthesis. In Eumops perotis (Western bonneted bat), this protein is Cytochrome b (MT-CYB).